The following is a 736-amino-acid chain: Ethylene receptor 2 (736 aa).

The next 3 helical transmembrane spans lie at 22-42 (ISDF…VYFV), 53-73 (VLVQ…INLW), and 94-114 (AAVS…LLSV). Residues cysteine 64 and histidine 68 each coordinate Cu cation. Residues 157–305 (DRHTILKTTL…VVADQVAVAL (149 aa)) enclose the GAF domain. The 238-residue stretch at 348 to 585 (VMNHEMRTPM…TAIFIVKLGI (238 aa)) folds into the Histidine kinase domain. Histidine 351 carries the post-translational modification Phosphohistidine; by autocatalysis. Residues 613–730 (KVLVMDDNGF…KMRSVLSGLL (118 aa)) enclose the Response regulatory domain. At aspartate 661 the chain carries 4-aspartylphosphate.

This sequence belongs to the ethylene receptor family. Homodimer; disulfide-linked. Requires Cu cation as cofactor. Activation probably requires a transfer of a phosphate group between a His in the transmitter domain and an Asp of the receiver domain. In terms of tissue distribution, leaves, flowers and fruits.

It localises to the endoplasmic reticulum membrane. The enzyme catalyses ATP + protein L-histidine = ADP + protein N-phospho-L-histidine.. In terms of biological role, may act early in the ethylene signal transduction pathway, possibly as an ethylene receptor, or as a regulator of the pathway. This is Ethylene receptor 2 (ETR2) from Solanum lycopersicum (Tomato).